Consider the following 32-residue polypeptide: Lectin (32 aa).

Belongs to the leguminous lectin family. In terms of assembly, homotetramer.

Its function is as follows. Metalloglycoprotein, containing Ca, Mg, Mn, and Zn and the carbohydrates galactose, glucosamine, mannose, and fucose. It agglutinates erythrocytes of blood group A1. This is Lectin from Macrotyloma axillare (Perennial horse gram).